Consider the following 150-residue polypeptide: Globin (150 aa).

Residues 11-150 enclose the Globin domain; that stretch reads PLSAAEKTKI…MICILLRSAY (140 aa). Heme b is bound by residues histidine 74 and histidine 106.

The protein belongs to the globin family. In terms of assembly, monomer.

This Lampetra fluviatilis (European river lamprey) protein is Globin.